We begin with the raw amino-acid sequence, 224 residues long: Processed variable antigen (224 aa).

17 tandem repeats follow at residues 1-6 (ETGESK), 7-12 (ETGESK), 13-18 (ETGESK), 19-24 (ETGESK), 25-30 (ETGESK), 31-36 (ETGESK), 37-42 (ETGESK), 43-48 (ETGESK), 49-54 (ETGESK), 55-60 (ETGESK), 61-66 (ETGESK), 67-72 (ETGESK), 73-78 (ETGESK), 79-84 (ETGESK), 85-90 (ETGESK), 91-96 (ETGESK), and 97-102 (ETGESK). Residues 1-102 (ETGESKETGE…GESKETGESK (102 aa)) are 17 X 6 AA tandem repeats of E-T-G-E-S-K. The segment covering 1-137 (ETGESKETGE…TEESKDREGN (137 aa)) has biased composition (basic and acidic residues). A disordered region spans residues 1-224 (ETGESKETGE…KKADNKKKKK (224 aa)). A compositionally biased stretch (low complexity) spans 144 to 153 (ENSENSNVTS). Composition is skewed to basic and acidic residues over residues 156–173 (EETK…EKLG) and 185–217 (EDPK…EKKA).

This chain is Processed variable antigen, found in Plasmodium falciparum.